The primary structure comprises 212 residues: Sentrin-specific protease 8 (212 aa).

Position 1 is an N-acetylmethionine (Met-1). The segment at 11 to 174 is protease; sequence SLLRQSDVSL…MYVICNTEAL (164 aa). Residues His-102 and Asp-119 contribute to the active site. Cys-163 functions as the Nucleophile in the catalytic mechanism.

This sequence belongs to the peptidase C48 family. In terms of tissue distribution, broadly expressed, with highest levels in kidney and pancreas.

Protease that catalyzes two essential functions in the NEDD8 pathway: processing of full-length NEDD8 to its mature form and deconjugation of NEDD8 from targeted proteins such as cullins or p53. The chain is Sentrin-specific protease 8 (SENP8) from Homo sapiens (Human).